The sequence spans 448 residues: Glutamyl-tRNA reductase (448 aa).

Substrate contacts are provided by residues threonine 49–arginine 52, serine 109, glutamate 114–glutamine 116, and glutamine 120. Catalysis depends on cysteine 50, which acts as the Nucleophile. NADP(+) is bound at residue glycine 189 to serine 194.

It belongs to the glutamyl-tRNA reductase family. As to quaternary structure, homodimer.

The catalysed reaction is (S)-4-amino-5-oxopentanoate + tRNA(Glu) + NADP(+) = L-glutamyl-tRNA(Glu) + NADPH + H(+). The protein operates within porphyrin-containing compound metabolism; protoporphyrin-IX biosynthesis; 5-aminolevulinate from L-glutamyl-tRNA(Glu): step 1/2. Catalyzes the NADPH-dependent reduction of glutamyl-tRNA(Glu) to glutamate 1-semialdehyde (GSA). The chain is Glutamyl-tRNA reductase from Staphylococcus aureus (strain bovine RF122 / ET3-1).